The sequence spans 337 residues: Cytoskeleton protein RodZ (337 aa).

Residues 1–111 are Cytoplasmic-facing; that stretch reads MNTEATHDQN…LGKRRKKRDG (111 aa). The region spanning 19-71 is the HTH cro/C1-type domain; that stretch reads LRNAREQLGLSQQAVAERLCLKVSTVRDIEEDKAPADLASTFLRGYIRSYARL. The segment at residues 30–49 is a DNA-binding region (H-T-H motif); that stretch reads QQAVAERLCLKVSTVRDIEE. The helical; Signal-anchor for type II membrane protein transmembrane segment at 112-132 threads the bilayer; that stretch reads WLMTFTWLVLFVVVGLTGAWW. Topologically, residues 133–337 are periplasmic; it reads WQNHKAQQEE…TLNAEQSPAQ (205 aa). The disordered stretch occupies residues 155–220; that stretch reads NAGGDSAQSV…QNAVVAPSQA (66 aa). Residues 160-192 show a composition bias toward polar residues; it reads SAQSVPLDTSEAASQDSTPAPTAPVDSTATNAV. The span at 193–217 shows a compositional bias: low complexity; sequence PQTPDASATTTAPAADAQQNAVVAP.

It belongs to the RodZ family.

Its subcellular location is the cell inner membrane. Its function is as follows. Cytoskeletal protein that is involved in cell-shape control through regulation of the length of the long axis. The polypeptide is Cytoskeleton protein RodZ (Citrobacter koseri (strain ATCC BAA-895 / CDC 4225-83 / SGSC4696)).